Reading from the N-terminus, the 364-residue chain is Protein Wnt-6 (364 aa).

The signal sequence occupies residues 1 to 23 (MLPPVPSRLGLLLLLLCPAHVDG). 11 disulfide bridges follow: cysteine 75-cysteine 86, cysteine 123-cysteine 131, cysteine 133-cysteine 171, cysteine 221-cysteine 235, cysteine 223-cysteine 230, cysteine 293-cysteine 324, cysteine 309-cysteine 319, cysteine 323-cysteine 363, cysteine 339-cysteine 354, cysteine 341-cysteine 351, and cysteine 346-cysteine 347. Residue asparagine 85 is glycosylated (N-linked (GlcNAc...) asparagine). A disordered region spans residues 140–162 (APPRPSGLLGTPGPPGPTGSPDA). Serine 227 carries O-palmitoleoyl serine; by PORCN lipidation. N-linked (GlcNAc...) asparagine glycosylation occurs at asparagine 310.

This sequence belongs to the Wnt family. As to quaternary structure, interacts with PORCN. Post-translationally, palmitoleoylation is required for efficient binding to frizzled receptors. Depalmitoleoylation leads to Wnt signaling pathway inhibition. As to expression, detected in ileum, colon and stomach (at protein level).

The protein resides in the secreted. The protein localises to the extracellular space. It is found in the extracellular matrix. Its function is as follows. Ligand for members of the frizzled family of seven transmembrane receptors. Probable developmental protein. May be a signaling molecule which affects the development of discrete regions of tissues. Is likely to signal over only few cell diameters. The protein is Protein Wnt-6 (Wnt6) of Mus musculus (Mouse).